The chain runs to 319 residues: Beta-ketoacyl-[acyl-carrier-protein] synthase III (319 aa).

Residues C115 and H246 contribute to the active site. The segment at 247 to 251 (QANLR) is ACP-binding. N276 is an active-site residue.

It belongs to the thiolase-like superfamily. FabH family. In terms of assembly, homodimer.

It is found in the cytoplasm. It catalyses the reaction malonyl-[ACP] + acetyl-CoA + H(+) = 3-oxobutanoyl-[ACP] + CO2 + CoA. Its pathway is lipid metabolism; fatty acid biosynthesis. Catalyzes the condensation reaction of fatty acid synthesis by the addition to an acyl acceptor of two carbons from malonyl-ACP. Catalyzes the first condensation reaction which initiates fatty acid synthesis and may therefore play a role in governing the total rate of fatty acid production. Possesses both acetoacetyl-ACP synthase and acetyl transacylase activities. Its substrate specificity determines the biosynthesis of branched-chain and/or straight-chain of fatty acids. The chain is Beta-ketoacyl-[acyl-carrier-protein] synthase III from Coxiella burnetii (strain CbuK_Q154) (Coxiella burnetii (strain Q154)).